Here is a 417-residue protein sequence, read N- to C-terminus: UDP-N-acetylglucosamine 1-carboxyvinyltransferase (417 aa).

A phosphoenolpyruvate-binding site is contributed by 22–23; it reads KN. Arg93 provides a ligand contact to UDP-N-acetyl-alpha-D-glucosamine. The active-site Proton donor is the Cys117. Cys117 is subject to 2-(S-cysteinyl)pyruvic acid O-phosphothioketal. Residues 122–126, Asp304, and Ile326 each bind UDP-N-acetyl-alpha-D-glucosamine; that span reads RPVDQ.

This sequence belongs to the EPSP synthase family. MurA subfamily.

The protein localises to the cytoplasm. The catalysed reaction is phosphoenolpyruvate + UDP-N-acetyl-alpha-D-glucosamine = UDP-N-acetyl-3-O-(1-carboxyvinyl)-alpha-D-glucosamine + phosphate. The protein operates within cell wall biogenesis; peptidoglycan biosynthesis. Cell wall formation. Adds enolpyruvyl to UDP-N-acetylglucosamine. The chain is UDP-N-acetylglucosamine 1-carboxyvinyltransferase from Laribacter hongkongensis (strain HLHK9).